Here is a 1372-residue protein sequence, read N- to C-terminus: DNA-directed RNA polymerase subunit beta (1372 aa).

The protein belongs to the RNA polymerase beta chain family. As to quaternary structure, the RNAP catalytic core consists of 2 alpha, 1 beta, 1 beta' and 1 omega subunit. When a sigma factor is associated with the core the holoenzyme is formed, which can initiate transcription.

The catalysed reaction is RNA(n) + a ribonucleoside 5'-triphosphate = RNA(n+1) + diphosphate. In terms of biological role, DNA-dependent RNA polymerase catalyzes the transcription of DNA into RNA using the four ribonucleoside triphosphates as substrates. The protein is DNA-directed RNA polymerase subunit beta of Bradyrhizobium diazoefficiens (strain JCM 10833 / BCRC 13528 / IAM 13628 / NBRC 14792 / USDA 110).